Here is a 213-residue protein sequence, read N- to C-terminus: Probable transaldolase (213 aa).

The Schiff-base intermediate with substrate role is filled by Lys-83.

It belongs to the transaldolase family. Type 3B subfamily.

The protein resides in the cytoplasm. The catalysed reaction is D-sedoheptulose 7-phosphate + D-glyceraldehyde 3-phosphate = D-erythrose 4-phosphate + beta-D-fructose 6-phosphate. It functions in the pathway carbohydrate degradation; pentose phosphate pathway; D-glyceraldehyde 3-phosphate and beta-D-fructose 6-phosphate from D-ribose 5-phosphate and D-xylulose 5-phosphate (non-oxidative stage): step 2/3. Functionally, transaldolase is important for the balance of metabolites in the pentose-phosphate pathway. This chain is Probable transaldolase, found in Geobacillus thermodenitrificans (strain NG80-2).